The chain runs to 145 residues: Small ribosomal subunit protein bS16 (145 aa).

Positions 82-145 (IKERAATNNP…EAAAEEQTEA (64 aa)) are disordered. The span at 95 to 115 (EPGKKAKERAEERAEKAREAA) shows a compositional bias: basic and acidic residues. Residues 116 to 137 (EAAAAAAAAPAEEAAAEAPAEA) show a composition bias toward low complexity.

The protein belongs to the bacterial ribosomal protein bS16 family.

This chain is Small ribosomal subunit protein bS16, found in Novosphingobium aromaticivorans (strain ATCC 700278 / DSM 12444 / CCUG 56034 / CIP 105152 / NBRC 16084 / F199).